Reading from the N-terminus, the 642-residue chain is Bifunctional protein glk (642 aa).

Positions 1–340 are glucokinase; it reads MSTGAQSKAA…QLSNRSGGAS (340 aa). 23 to 28 serves as a coordination point for ATP; the sequence is ADVGGT. An HTH rpiR-type domain is found at 341–417; sequence SAVFERIRQM…LKLATGLTGT (77 aa). The interval 341–642 is putative HTH-type transcriptional regulator; sequence SAVFERIRQM…SPAAKDVARD (302 aa). A DNA-binding region (H-T-H motif) is located at residues 377-396; it reads IVDIARKADVSQPTVIRFCR. The SIS domain occupies 461–600; that stretch reads AIEILNGARR…AVGVAIRRAS (140 aa). The helical transmembrane segment at 576 to 596 threads the bilayer; the sequence is SMISRILHLLMIDILAVGVAI.

This sequence in the N-terminal section; belongs to the bacterial glucokinase family.

Its subcellular location is the membrane. The catalysed reaction is D-glucose + ATP = D-glucose 6-phosphate + ADP + H(+). This is Bifunctional protein glk (glk) from Burkholderia lata (strain ATCC 17760 / DSM 23089 / LMG 22485 / NCIMB 9086 / R18194 / 383).